The chain runs to 342 residues: 4-hydroxy-2-oxovalerate aldolase (342 aa).

The region spanning isoleucine 7 to methionine 257 is the Pyruvate carboxyltransferase domain. Arginine 15 to aspartate 16 serves as a coordination point for substrate. Aspartate 16 provides a ligand contact to Mn(2+). Histidine 19 functions as the Proton acceptor in the catalytic mechanism. Residues serine 169 and histidine 196 each contribute to the substrate site. Residues histidine 196 and histidine 198 each coordinate Mn(2+). Tyrosine 287 is a substrate binding site.

This sequence belongs to the 4-hydroxy-2-oxovalerate aldolase family.

It carries out the reaction (S)-4-hydroxy-2-oxopentanoate = acetaldehyde + pyruvate. The protein is 4-hydroxy-2-oxovalerate aldolase (nbaI) of Geobacillus thermodenitrificans (strain NG80-2).